We begin with the raw amino-acid sequence, 308 residues long: Ferredoxin--NADP reductase (308 aa).

Residues Glu26, Gln34, Tyr39, Val77, Phe106, Asp266, and Thr306 each coordinate FAD.

Belongs to the ferredoxin--NADP reductase type 2 family. As to quaternary structure, homodimer. It depends on FAD as a cofactor.

It catalyses the reaction 2 reduced [2Fe-2S]-[ferredoxin] + NADP(+) + H(+) = 2 oxidized [2Fe-2S]-[ferredoxin] + NADPH. This is Ferredoxin--NADP reductase from Lactobacillus delbrueckii subsp. bulgaricus (strain ATCC 11842 / DSM 20081 / BCRC 10696 / JCM 1002 / NBRC 13953 / NCIMB 11778 / NCTC 12712 / WDCM 00102 / Lb 14).